The chain runs to 642 residues: Chaperone protein DnaK (642 aa).

Phosphothreonine; by autocatalysis is present on Thr198. The tract at residues Ala602–Asp642 is disordered.

It belongs to the heat shock protein 70 family.

In terms of biological role, acts as a chaperone. The protein is Chaperone protein DnaK of Dichelobacter nodosus (strain VCS1703A).